Reading from the N-terminus, the 252-residue chain is 5'-methylthioadenosine/S-adenosylhomocysteine nucleosidase (252 aa).

Glu20 acts as the Proton acceptor in catalysis. Substrate is bound by residues Gly86, Ile160, and 181 to 182; that span reads ME. Asp205 functions as the Proton donor in the catalytic mechanism.

It belongs to the PNP/UDP phosphorylase family. MtnN subfamily. Homodimer.

The enzyme catalyses S-adenosyl-L-homocysteine + H2O = S-(5-deoxy-D-ribos-5-yl)-L-homocysteine + adenine. It carries out the reaction S-methyl-5'-thioadenosine + H2O = 5-(methylsulfanyl)-D-ribose + adenine. The catalysed reaction is 5'-deoxyadenosine + H2O = 5-deoxy-D-ribose + adenine. Its pathway is amino-acid biosynthesis; L-methionine biosynthesis via salvage pathway; S-methyl-5-thio-alpha-D-ribose 1-phosphate from S-methyl-5'-thioadenosine (hydrolase route): step 1/2. In terms of biological role, catalyzes the irreversible cleavage of the glycosidic bond in both 5'-methylthioadenosine (MTA) and S-adenosylhomocysteine (SAH/AdoHcy) to adenine and the corresponding thioribose, 5'-methylthioribose and S-ribosylhomocysteine, respectively. Also cleaves 5'-deoxyadenosine, a toxic by-product of radical S-adenosylmethionine (SAM) enzymes, into 5-deoxyribose and adenine. Thus, is required for in vivo function of the radical SAM enzymes biotin synthase and lipoic acid synthase, that are inhibited by 5'-deoxyadenosine accumulation. The protein is 5'-methylthioadenosine/S-adenosylhomocysteine nucleosidase of Buchnera aphidicola subsp. Baizongia pistaciae (strain Bp).